The sequence spans 507 residues: Glucose-6-phosphate isomerase (507 aa).

Catalysis depends on Glu-338, which acts as the Proton donor. Active-site residues include His-369 and Lys-479.

This sequence belongs to the GPI family.

It localises to the cytoplasm. The enzyme catalyses alpha-D-glucose 6-phosphate = beta-D-fructose 6-phosphate. It participates in carbohydrate biosynthesis; gluconeogenesis. It functions in the pathway carbohydrate degradation; glycolysis; D-glyceraldehyde 3-phosphate and glycerone phosphate from D-glucose: step 2/4. In terms of biological role, provides a gateway for fructose into the Entner-Doudouroff pathway. Catalyzes the reversible isomerization of glucose-6-phosphate to fructose-6-phosphate. The protein is Glucose-6-phosphate isomerase of Zymomonas mobilis subsp. mobilis (strain ATCC 31821 / ZM4 / CP4).